The following is a 51-amino-acid chain: Large ribosomal subunit protein eL39 (51 aa).

Belongs to the eukaryotic ribosomal protein eL39 family. Interacts with IMPACT.

This chain is Large ribosomal subunit protein eL39 (RPL39), found in Gallus gallus (Chicken).